Consider the following 102-residue polypeptide: Thioredoxin (102 aa).

A Thioredoxin domain is found at 1-102 (MVKVVSAENF…SLIRLINQHS (102 aa)). An intrachain disulfide couples C28 to C31.

This sequence belongs to the thioredoxin family.

Functionally, participates in various redox reactions through the reversible oxidation of its active center dithiol to a disulfide and catalyzes dithiol-disulfide exchange reactions. The polypeptide is Thioredoxin (trxA) (Chlamydia caviae (strain ATCC VR-813 / DSM 19441 / 03DC25 / GPIC) (Chlamydophila caviae)).